The sequence spans 260 residues: Coiled-coil domain-containing protein 172 (260 aa).

Residues 13-194 (SEHQAEESRR…FEDKKHEAIC (182 aa)) adopt a coiled-coil conformation.

This sequence belongs to the CCDC172 family. May interact with TEKT2.

The protein localises to the cytoplasm. Its subcellular location is the cell projection. The protein resides in the cilium. In Bos taurus (Bovine), this protein is Coiled-coil domain-containing protein 172 (CCDC172).